The sequence spans 287 residues: Phosphoribosylaminoimidazole-succinocarboxamide synthase (287 aa).

This sequence belongs to the SAICAR synthetase family.

The catalysed reaction is 5-amino-1-(5-phospho-D-ribosyl)imidazole-4-carboxylate + L-aspartate + ATP = (2S)-2-[5-amino-1-(5-phospho-beta-D-ribosyl)imidazole-4-carboxamido]succinate + ADP + phosphate + 2 H(+). Its pathway is purine metabolism; IMP biosynthesis via de novo pathway; 5-amino-1-(5-phospho-D-ribosyl)imidazole-4-carboxamide from 5-amino-1-(5-phospho-D-ribosyl)imidazole-4-carboxylate: step 1/2. The chain is Phosphoribosylaminoimidazole-succinocarboxamide synthase from Neisseria meningitidis serogroup C (strain 053442).